Here is a 456-residue protein sequence, read N- to C-terminus: Gamma-aminobutyric acid receptor subunit alpha-1 (456 aa).

The first 27 residues, 1 to 27 (MKKSPGLSDYLWAWTLFLSTLTGRSYG), serve as a signal peptide directing secretion. At 28–253 (QPSLQDELKD…FHLKRKIGYF (226 aa)) the chain is on the extracellular side. Asparagine 38 is a glycosylation site (N-linked (GlcNAc...) asparagine). A 4-aminobutanoate-binding site is contributed by arginine 94. The N-linked (GlcNAc...) asparagine glycan is linked to asparagine 138. Threonine 157 is a binding site for 4-aminobutanoate. A disulfide bond links cysteine 166 and cysteine 180. The helical transmembrane segment at 254–274 (VIQTYLPCIMTVILSQVSFWL) threads the bilayer. Over 275-279 (NRESV) the chain is Cytoplasmic. Residues 280 to 301 (PARTVFGVTTVLTMTTLSISAR) traverse the membrane as a helical segment. At 302–311 (NSLPKVAYAT) the chain is on the extracellular side. The helical transmembrane segment at 312 to 333 (AMDWFIAVCYAFVFSALIEFAT) threads the bilayer. At 334–421 (VNYFTKRGYA…TFNSVSKIDR (88 aa)) the chain is on the cytoplasmic side. The chain crosses the membrane as a helical span at residues 422 to 441 (LSRIAFPLLFGIFNLVYWAT). Residues 442 to 456 (YLNREPQLKAPTPHQ) lie on the Extracellular side of the membrane.

The protein belongs to the ligand-gated ion channel (TC 1.A.9) family. Gamma-aminobutyric acid receptor (TC 1.A.9.5) subfamily. GABRA1 sub-subfamily. Heteropentamer, formed by a combination of alpha (GABRA1-6), beta (GABRB1-3), gamma (GABRG1-3), delta (GABRD), epsilon (GABRE), rho (GABRR1-3), pi (GABRP) and theta (GABRQ) subunits, each subunit exhibiting distinct physiological and pharmacological properties. Interacts with UBQLN1. Interacts with TRAK1. Interacts with KIF21B. Identified in a complex of 720 kDa composed of LHFPL4, NLGN2, GABRA1, GABRB2, GABRG2 and GABRB3. Interacts with LHFPL4. Interacts with NLGN2. Interacts with SHISA7; interaction leads to the regulation of GABA(A) receptor trafficking, channel deactivation kinetics and pharmacology. In terms of tissue distribution, cerebellar granule cells, Purkinje cells and stellate/basket cells.

Its subcellular location is the postsynaptic cell membrane. It is found in the cell membrane. The protein resides in the cytoplasmic vesicle membrane. The catalysed reaction is chloride(in) = chloride(out). Its activity is regulated as follows. Allosterically activated by benzodiazepines, the neuroanesthetic alphaxalone and pentobarbital. Inhibited by the antagonist bicuculline. Potentiated by histamine. In terms of biological role, alpha subunit of the heteropentameric ligand-gated chloride channel gated by gamma-aminobutyric acid (GABA), a major inhibitory neurotransmitter in the brain. GABA-gated chloride channels, also named GABA(A) receptors (GABAAR), consist of five subunits arranged around a central pore and contain GABA active binding site(s) located at the alpha and beta subunit interface(s). When activated by GABA, GABAARs selectively allow the flow of chloride anions across the cell membrane down their electrochemical gradient. Alpha-1/GABRA1-containing GABAARs are largely synaptic. Chloride influx into the postsynaptic neuron following GABAAR opening decreases the neuron ability to generate a new action potential, thereby reducing nerve transmission. GABAARs containing alpha-1 and beta-2 or -3 subunits exhibit synaptogenic activity; the gamma-2 subunit being necessary but not sufficient to induce rapid synaptic contacts formation. GABAARs function also as histamine receptor where histamine binds at the interface of two neighboring beta subunits and potentiates GABA response. GABAARs containing alpha, beta and epsilon subunits also permit spontaneous chloride channel activity while preserving the structural information required for GABA-gated openings. Alpha-1-mediated plasticity in the orbitofrontal cortex regulates context-dependent action selection. Together with rho subunits, may also control neuronal and glial GABAergic transmission in the cerebellum. This Bos taurus (Bovine) protein is Gamma-aminobutyric acid receptor subunit alpha-1 (GABRA1).